Consider the following 213-residue polypeptide: Cell division protein SepF 2 (213 aa).

Positions 16 to 63 are disordered; that stretch reads EDDGYDGRGFDPDDDFEPELDPEPERDRRRHEPPHQSHQALHPQRDES. Positions 27-39 are enriched in acidic residues; that stretch reads PDDDFEPELDPEP.

The protein belongs to the SepF family. As to quaternary structure, homodimer. Interacts with FtsZ.

It localises to the cytoplasm. In terms of biological role, cell division protein that is part of the divisome complex and is recruited early to the Z-ring. Probably stimulates Z-ring formation, perhaps through the cross-linking of FtsZ protofilaments. Its function overlaps with FtsA. In Streptomyces avermitilis (strain ATCC 31267 / DSM 46492 / JCM 5070 / NBRC 14893 / NCIMB 12804 / NRRL 8165 / MA-4680), this protein is Cell division protein SepF 2.